The following is a 613-amino-acid chain: TANK-binding kinase 1-binding protein 1 (613 aa).

The interval 1–280 (MESMFEDDIS…QDLASNQSEC (280 aa)) is homodimerization. Residues 48–162 (YGDIKERLGG…ALVETHLRQI (115 aa)) adopt a coiled-coil conformation. The residue at position 184 (Ser184) is a Phosphoserine. A coiled-coil region spans residues 218-277 (TSVSVSELERRRLEEALEAAQGEARGAQLREEQLQAECERLQGELKQLQETRAQDLASNQ). The interval 281–330 (GMAWVKRVGDDQVNLALAYTELTEELGRLRELSSLQGRILRTLLQEQARN) is interaction with TBK1 and IKBKE. Positions 328-457 (ARNAGQRHSP…HHAKAGFQGR (130 aa)) are disordered. Residues 346–361 (PACPSPSPPARPPPCA) show a composition bias toward pro residues. Low complexity predominate over residues 362–372 (PCQSPAAQRRS). 6 positions are modified to phosphoserine: Ser365, Ser372, Ser379, Ser385, Ser400, and Ser415. The span at 389–406 (PSCPSPVPQRRSPVPPSC) shows a compositional bias: pro residues. The span at 416 to 433 (PVPPSCPAPQPRPPPPPG) shows a compositional bias: pro residues. Ser502 and Ser532 each carry phosphoserine. Residues 581–607 (IRSCPLCQLGFPVGYPDDALIKHIDSH) form a UBZ1-type zinc finger. Zn(2+)-binding residues include Cys584, Cys587, His603, and His607.

Homodimer. May form a heterodimer with NAP1. Interacts with TKB1 and IKBKE. Weakly interacts with DDX3X.

Adapter protein which constitutively binds TBK1 and IKBKE playing a role in antiviral innate immunity. Essential for the efficient induction of IRF-dependent transcription following infection with Sendai virus. The protein is TANK-binding kinase 1-binding protein 1 of Rattus norvegicus (Rat).